A 166-amino-acid chain; its full sequence is Cyclic pyranopterin monophosphate synthase (166 aa).

Substrate-binding positions include 83–85 and 121–122; these read LCH and ME. The active site involves Asp136.

The protein belongs to the MoaC family. In terms of assembly, homohexamer; trimer of dimers.

The enzyme catalyses (8S)-3',8-cyclo-7,8-dihydroguanosine 5'-triphosphate = cyclic pyranopterin phosphate + diphosphate. Its pathway is cofactor biosynthesis; molybdopterin biosynthesis. Catalyzes the conversion of (8S)-3',8-cyclo-7,8-dihydroguanosine 5'-triphosphate to cyclic pyranopterin monophosphate (cPMP). This Syntrophobacter fumaroxidans (strain DSM 10017 / MPOB) protein is Cyclic pyranopterin monophosphate synthase.